A 936-amino-acid chain; its full sequence is Protein translocase subunit SecA (936 aa).

ATP contacts are provided by residues Q87, 105 to 109 (GEGKT), and D515. Positions 920, 922, 931, and 932 each coordinate Zn(2+).

This sequence belongs to the SecA family. Monomer and homodimer. Part of the essential Sec protein translocation apparatus which comprises SecA, SecYEG and auxiliary proteins SecDF-YajC and YidC. The cofactor is Zn(2+).

It localises to the cell inner membrane. Its subcellular location is the cytoplasm. It carries out the reaction ATP + H2O + cellular proteinSide 1 = ADP + phosphate + cellular proteinSide 2.. Functionally, part of the Sec protein translocase complex. Interacts with the SecYEG preprotein conducting channel. Has a central role in coupling the hydrolysis of ATP to the transfer of proteins into and across the cell membrane, serving both as a receptor for the preprotein-SecB complex and as an ATP-driven molecular motor driving the stepwise translocation of polypeptide chains across the membrane. This Paraburkholderia phytofirmans (strain DSM 17436 / LMG 22146 / PsJN) (Burkholderia phytofirmans) protein is Protein translocase subunit SecA.